The following is a 365-amino-acid chain: 2-aminoethylphosphonate--pyruvate transaminase (365 aa).

At K194 the chain carries N6-(pyridoxal phosphate)lysine.

It belongs to the class-V pyridoxal-phosphate-dependent aminotransferase family. PhnW subfamily. In terms of assembly, homodimer. Requires pyridoxal 5'-phosphate as cofactor.

The enzyme catalyses (2-aminoethyl)phosphonate + pyruvate = phosphonoacetaldehyde + L-alanine. Functionally, involved in phosphonate degradation. The chain is 2-aminoethylphosphonate--pyruvate transaminase from Bacillus cereus (strain ATCC 10987 / NRS 248).